Consider the following 362-residue polypeptide: Heat-inducible transcription repressor HrcA (362 aa).

This sequence belongs to the HrcA family.

Negative regulator of class I heat shock genes (grpE-dnaK-dnaJ and groELS operons). Prevents heat-shock induction of these operons. This chain is Heat-inducible transcription repressor HrcA, found in Rhodopseudomonas palustris (strain BisB18).